We begin with the raw amino-acid sequence, 382 residues long: Bifunctional enzyme IspD/IspF (382 aa).

The tract at residues 1 to 225 is 2-C-methyl-D-erythritol 4-phosphate cytidylyltransferase; the sequence is MTFSVVIVAA…EHLAGVARVT (225 aa). The tract at residues 226-382 is 2-C-methyl-D-erythritol 2,4-cyclodiphosphate synthase; the sequence is RVGQGFDAHR…SAVVAVETPA (157 aa). A divalent metal cation-binding residues include D232 and H234. Residues 232–234 and 258–259 contribute to the 4-CDP-2-C-methyl-D-erythritol 2-phosphate site; these read DAH and HS. H266 provides a ligand contact to a divalent metal cation. Residues 280–282, 356–359, F363, and R366 contribute to the 4-CDP-2-C-methyl-D-erythritol 2-phosphate site; these read DIG and TTTE.

In the N-terminal section; belongs to the IspD/TarI cytidylyltransferase family. IspD subfamily. It in the C-terminal section; belongs to the IspF family. It depends on a divalent metal cation as a cofactor.

The enzyme catalyses 2-C-methyl-D-erythritol 4-phosphate + CTP + H(+) = 4-CDP-2-C-methyl-D-erythritol + diphosphate. The catalysed reaction is 4-CDP-2-C-methyl-D-erythritol 2-phosphate = 2-C-methyl-D-erythritol 2,4-cyclic diphosphate + CMP. Its pathway is isoprenoid biosynthesis; isopentenyl diphosphate biosynthesis via DXP pathway; isopentenyl diphosphate from 1-deoxy-D-xylulose 5-phosphate: step 2/6. It participates in isoprenoid biosynthesis; isopentenyl diphosphate biosynthesis via DXP pathway; isopentenyl diphosphate from 1-deoxy-D-xylulose 5-phosphate: step 4/6. Its function is as follows. Bifunctional enzyme that catalyzes the formation of 4-diphosphocytidyl-2-C-methyl-D-erythritol from CTP and 2-C-methyl-D-erythritol 4-phosphate (MEP) (IspD), and catalyzes the conversion of 4-diphosphocytidyl-2-C-methyl-D-erythritol 2-phosphate (CDP-ME2P) to 2-C-methyl-D-erythritol 2,4-cyclodiphosphate (ME-CPP) with a corresponding release of cytidine 5-monophosphate (CMP) (IspF). The chain is Bifunctional enzyme IspD/IspF from Caulobacter vibrioides (strain ATCC 19089 / CIP 103742 / CB 15) (Caulobacter crescentus).